We begin with the raw amino-acid sequence, 272 residues long: GATA zinc finger domain-containing protein 1 (272 aa).

The GATA-type zinc-finger motif lies at 9–33; the sequence is CSVCKTTSSSMWKKGPQGEILCHHC. The segment at 67 to 120 is disordered; sequence TFASTSAAPPQSNGGGGGKQSKQEIHRRSARLRNTKYKSAPAAEKKVSTKGKGR. Lys167 is subject to N6-acetyllysine. Lys265 participates in a covalent cross-link: Glycyl lysine isopeptide (Lys-Gly) (interchain with G-Cter in SUMO2).

The protein resides in the nucleus. This is GATA zinc finger domain-containing protein 1 (GATAD1) from Bos taurus (Bovine).